We begin with the raw amino-acid sequence, 307 residues long: Probable inactive peptidyl-prolyl cis-trans isomerase-like 6 (307 aa).

Positions 141–304 (FLDISIDLYP…QNCVITASGQ (164 aa)) constitute a PPIase cyclophilin-type domain.

This sequence belongs to the cyclophilin-type PPIase family.

Functionally, probable inactive PPIase with no peptidyl-prolyl cis-trans isomerase activity. This chain is Probable inactive peptidyl-prolyl cis-trans isomerase-like 6, found in Bos taurus (Bovine).